The following is a 343-amino-acid chain: L-threonine 3-dehydrogenase (343 aa).

C40 provides a ligand contact to Zn(2+). Catalysis depends on charge relay system residues T42 and H45. The Zn(2+) site is built by H65, E66, C95, C98, C101, and C109. NAD(+)-binding positions include I177, D197, R202, 264 to 266, and 288 to 289; these read LGI and IY.

The protein belongs to the zinc-containing alcohol dehydrogenase family. In terms of assembly, homotetramer. Zn(2+) is required as a cofactor.

It is found in the cytoplasm. The enzyme catalyses L-threonine + NAD(+) = (2S)-2-amino-3-oxobutanoate + NADH + H(+). The protein operates within amino-acid degradation; L-threonine degradation via oxydo-reductase pathway; glycine from L-threonine: step 1/2. In terms of biological role, catalyzes the NAD(+)-dependent oxidation of L-threonine to 2-amino-3-ketobutyrate. The protein is L-threonine 3-dehydrogenase of Vibrio parahaemolyticus serotype O3:K6 (strain RIMD 2210633).